The following is a 479-amino-acid chain: 6-phosphogluconate dehydrogenase, decarboxylating (479 aa).

Residues 9-14, 32-34, 77-79, and asparagine 105 contribute to the NADP(+) site; these read GLGVMG, NRT, and VQA. Residues asparagine 105 and 131-133 each bind substrate; that span reads SGG. Catalysis depends on lysine 186, which acts as the Proton acceptor. Substrate is bound at residue 189-190; sequence HN. Glutamate 193 serves as the catalytic Proton donor. Residues tyrosine 194, lysine 263, arginine 290, arginine 454, and histidine 460 each coordinate substrate.

This sequence belongs to the 6-phosphogluconate dehydrogenase family. Homodimer.

The catalysed reaction is 6-phospho-D-gluconate + NADP(+) = D-ribulose 5-phosphate + CO2 + NADPH. It functions in the pathway carbohydrate degradation; pentose phosphate pathway; D-ribulose 5-phosphate from D-glucose 6-phosphate (oxidative stage): step 3/3. In terms of biological role, catalyzes the oxidative decarboxylation of 6-phosphogluconate to ribulose 5-phosphate and CO(2), with concomitant reduction of NADP to NADPH. This Trypanosoma brucei brucei protein is 6-phosphogluconate dehydrogenase, decarboxylating (GND).